The following is a 355-amino-acid chain: MAEQMVFDADQVTAEVAEGIEKIQNASNLEELKAIKTTYAGADSAMTKASKAIGSLPADQKKEAGKLMGKLRADFGRAYGPKEVELKEAAEKAALAAETVDMTLPVNRKPLGARHPLPKLMEDVEDFFISMGWQISSGLEIEAEWYNFDSLNFGPDHPARQMQDTFYVKGNQAKDAAGFVGSNMVVRTQTSSDQVRALLTRGVPLYIASPGRVFRTDELDATHTPVFHQCEALAVDKHLTMADLKGVLDKLAVAMFGPEAKTRLRPSYFPFTEPSAELDLWFPDKKGGPGWLEWGGCGMVNPNVLKSAGIDPDVYTGFAFGVGMERTLLLRSDINDMHDLVEGDVRFAEQFVMGE.

E273 contributes to the Mg(2+) binding site.

It belongs to the class-II aminoacyl-tRNA synthetase family. Phe-tRNA synthetase alpha subunit type 1 subfamily. In terms of assembly, tetramer of two alpha and two beta subunits. Requires Mg(2+) as cofactor.

The protein localises to the cytoplasm. It catalyses the reaction tRNA(Phe) + L-phenylalanine + ATP = L-phenylalanyl-tRNA(Phe) + AMP + diphosphate + H(+). The protein is Phenylalanine--tRNA ligase alpha subunit of Bifidobacterium longum subsp. infantis (strain ATCC 15697 / DSM 20088 / JCM 1222 / NCTC 11817 / S12).